Reading from the N-terminus, the 127-residue chain is Fluoride-specific ion channel FluC (127 aa).

The next 3 helical transmembrane spans lie at 28-48, 73-93, and 98-118; these read LALF…SLAM, TGVL…ALLI, and VGLA…GLFL. Gly77 and Thr80 together coordinate Na(+).

This sequence belongs to the fluoride channel Fluc/FEX (TC 1.A.43) family.

The protein localises to the cell inner membrane. The enzyme catalyses fluoride(in) = fluoride(out). With respect to regulation, na(+) is not transported, but it plays an essential structural role and its presence is essential for fluoride channel function. Its function is as follows. Fluoride-specific ion channel. Important for reducing fluoride concentration in the cell, thus reducing its toxicity. This chain is Fluoride-specific ion channel FluC, found in Beijerinckia indica subsp. indica (strain ATCC 9039 / DSM 1715 / NCIMB 8712).